The chain runs to 235 residues: tRNA (guanine-N(1)-)-methyltransferase (235 aa).

Residues Gly112 and 132–137 contribute to the S-adenosyl-L-methionine site; that span reads IGDYVL.

Belongs to the RNA methyltransferase TrmD family. As to quaternary structure, homodimer.

It is found in the cytoplasm. The enzyme catalyses guanosine(37) in tRNA + S-adenosyl-L-methionine = N(1)-methylguanosine(37) in tRNA + S-adenosyl-L-homocysteine + H(+). Its function is as follows. Specifically methylates guanosine-37 in various tRNAs. The chain is tRNA (guanine-N(1)-)-methyltransferase from Cytophaga hutchinsonii (strain ATCC 33406 / DSM 1761 / CIP 103989 / NBRC 15051 / NCIMB 9469 / D465).